The following is a 433-amino-acid chain: GPI mannosyltransferase 2 (433 aa).

Met1 is a topological domain (cytoplasmic). The chain crosses the membrane as a helical span at residues 2-22 (IVGLTLYFVLFRSIQYLLVFL). Over 23–109 (TPIRQFDTST…NNDSIYHALR (87 aa)) the chain is Lumenal. Asn69 and Asn101 each carry an N-linked (GlcNAc...) asparagine glycan. The helical transmembrane segment at 110 to 130 (VGVAIENVLFYLSGIVLYFLT) threads the bilayer. Over 131-161 (KKIFSQNIRQSQFARTIAKKTSLLFFLTSAA) the chain is Cytoplasmic. Residues 162 to 182 (GFLTSIYSEPLSFFFAFVGIW) form a helical membrane-spanning segment. Over 183–215 (SRECSISVPVLGQFDISWRYWFPYSFISMACFT) the chain is Lumenal. A helical transmembrane segment spans residues 216 to 236 (LASLNRSNCVLLGIYFIFDLI). Residues 237–243 (ELTKNRK) are Cytoplasmic-facing. The chain crosses the membrane as a helical span at residues 244–264 (FVKAICFPLLSGSLMFSALLY). The Lumenal segment spans residues 265-318 (QQYYLPYKTFCPQRGEWCKSQLFSSIFITKTSLYSYIQSHYWGVGLLKYWTPNN). A helical transmembrane segment spans residues 319–339 (IPNFLFAVPNIIILIYSSIYF). Over 340-350 (SKIYPSYNLKA) the chain is Cytoplasmic. A helical membrane pass occupies residues 351 to 371 (LVWITRALVVIVCFFAHVQIL). At 372–409 (NRIASFLPLHLWYLADRLVKTSDPKKMENPKGDDKIVK) the chain is on the lumenal side. A helical transmembrane segment spans residues 410 to 430 (FYIYWLAFWIPLQTILFAAFL). The Cytoplasmic portion of the chain corresponds to 431–433 (PPA).

Belongs to the PIGV family. As to quaternary structure, part of the GPI mannosyltransferase 2 complex composed of GPI18 and PGA1.

The protein resides in the endoplasmic reticulum membrane. It participates in glycolipid biosynthesis; glycosylphosphatidylinositol-anchor biosynthesis. In terms of biological role, mannosyltransferase involved in glycosylphosphatidylinositol-anchor biosynthesis. Responsible for the transfer of the second mannose to the glycosylphosphatidylinositol during GPI precursor assembly. This is GPI mannosyltransferase 2 (GPI18) from Saccharomyces cerevisiae (strain ATCC 204508 / S288c) (Baker's yeast).